The chain runs to 693 residues: Polyribonucleotide nucleotidyltransferase (693 aa).

Mg(2+)-binding residues include Asp489 and Asp495. Residues 556-615 form the KH domain; that stretch reads PQIHVMNINPAKIKDVVGRGGATVKGIVEKTGAQIDTSDSGEVKVFAKDKKSMDMAVAMI. The region spanning 625–693 is the S1 motif domain; it reads GQVYKGKIVK…GRVKLSLVAR (69 aa).

Belongs to the polyribonucleotide nucleotidyltransferase family. In terms of assembly, component of the RNA degradosome, which is a multiprotein complex involved in RNA processing and mRNA degradation. Requires Mg(2+) as cofactor.

The protein localises to the cytoplasm. It carries out the reaction RNA(n+1) + phosphate = RNA(n) + a ribonucleoside 5'-diphosphate. Its function is as follows. Involved in mRNA degradation. Catalyzes the phosphorolysis of single-stranded polyribonucleotides processively in the 3'- to 5'-direction. The polypeptide is Polyribonucleotide nucleotidyltransferase (Francisella tularensis subsp. holarctica (strain FTNF002-00 / FTA)).